We begin with the raw amino-acid sequence, 146 residues long: Ferredoxin-type protein FwdE (146 aa).

2 4Fe-4S ferredoxin-type domains span residues 90–115 (IKLF…TLDN) and 116–145 (FTVG…FIKE). Cysteine 125, cysteine 128, cysteine 131, and cysteine 135 together coordinate [4Fe-4S] cluster.

[4Fe-4S] cluster is required as a cofactor.

This chain is Ferredoxin-type protein FwdE (fwdE), found in Methanocaldococcus jannaschii (strain ATCC 43067 / DSM 2661 / JAL-1 / JCM 10045 / NBRC 100440) (Methanococcus jannaschii).